A 237-amino-acid chain; its full sequence is Phosphoribosylaminoimidazole-succinocarboxamide synthase (237 aa).

The protein belongs to the SAICAR synthetase family.

It carries out the reaction 5-amino-1-(5-phospho-D-ribosyl)imidazole-4-carboxylate + L-aspartate + ATP = (2S)-2-[5-amino-1-(5-phospho-beta-D-ribosyl)imidazole-4-carboxamido]succinate + ADP + phosphate + 2 H(+). The protein operates within purine metabolism; IMP biosynthesis via de novo pathway; 5-amino-1-(5-phospho-D-ribosyl)imidazole-4-carboxamide from 5-amino-1-(5-phospho-D-ribosyl)imidazole-4-carboxylate: step 1/2. This is Phosphoribosylaminoimidazole-succinocarboxamide synthase from Idiomarina loihiensis (strain ATCC BAA-735 / DSM 15497 / L2-TR).